Reading from the N-terminus, the 195-residue chain is HTH-type transcriptional regulator BetI (195 aa).

Residues 8–68 (SIRRRQLIDA…ATMRDITSQL (61 aa)) form the HTH tetR-type domain. Positions 31-50 (TIAQIARRAGVSTGIISHYF) form a DNA-binding region, H-T-H motif.

Its pathway is amine and polyamine biosynthesis; betaine biosynthesis via choline pathway [regulation]. In terms of biological role, repressor involved in the biosynthesis of the osmoprotectant glycine betaine. It represses transcription of the choline transporter BetT and the genes of BetAB involved in the synthesis of glycine betaine. This is HTH-type transcriptional regulator BetI from Escherichia coli O8 (strain IAI1).